Consider the following 132-residue polypeptide: MTMTDPIADMLTRIRNANVVKHETVDVPASNMKKELARILLEEGFIRGYDVIEDGKQGIIRIQLKYGQEGERVITGLKKISKPGMRVYAANHEIPKVLNGLGISVISTSKGILTDKQARKENVGGEVICYVW.

Belongs to the universal ribosomal protein uS8 family. As to quaternary structure, part of the 30S ribosomal subunit. Contacts proteins S5 and S12.

One of the primary rRNA binding proteins, it binds directly to 16S rRNA central domain where it helps coordinate assembly of the platform of the 30S subunit. The polypeptide is Small ribosomal subunit protein uS8 (Clostridioides difficile (strain 630) (Peptoclostridium difficile)).